The chain runs to 365 residues: Ubiquitin carboxyl-terminal hydrolase 4 (365 aa).

A lipid anchor (N-myristoyl glycine) is attached at Gly-2. Residues 23–362 form the USP domain; it reads FGFENFGNTC…HGYILLYESL (340 aa). Residue Cys-32 is the Nucleophile of the active site. A Bipartite nuclear localization signal motif is present at residues 81-98; the sequence is KKKTGVIAPKRFVQRLKK. His-310 functions as the Proton acceptor in the catalytic mechanism.

Belongs to the peptidase C19 family. As to expression, constitutively and ubiquitously expressed.

The protein localises to the nucleus. The catalysed reaction is Thiol-dependent hydrolysis of ester, thioester, amide, peptide and isopeptide bonds formed by the C-terminal Gly of ubiquitin (a 76-residue protein attached to proteins as an intracellular targeting signal).. Functionally, recognizes and hydrolyzes the peptide bond at the C-terminal Gly of ubiquitin. Involved in the processing of poly-ubiquitin precursors as well as that of ubiquitinated proteins. Required for the correct development of pollen. The sequence is that of Ubiquitin carboxyl-terminal hydrolase 4 (UBP4) from Arabidopsis thaliana (Mouse-ear cress).